The primary structure comprises 139 residues: Large ribosomal subunit protein uL16 (139 aa).

The protein belongs to the universal ribosomal protein uL16 family. As to quaternary structure, part of the 50S ribosomal subunit.

Functionally, binds 23S rRNA and is also seen to make contacts with the A and possibly P site tRNAs. This Koribacter versatilis (strain Ellin345) protein is Large ribosomal subunit protein uL16.